A 670-amino-acid polypeptide reads, in one-letter code: Leucine-rich repeat-containing protein 45 (670 aa).

6 LRR repeats span residues 58 to 80 (TLCTELVLSDCMLSEEGATLLLR), 87 to 107 (VLRFLDLKGNNLRAAGAEALG), 115 to 136 (SIQSLTLEWNSLGTWDDAFATF), 145 to 166 (ALQRLDLRNNQISHKGAEELAL), 173 to 194 (TLQQLDLRWNNVGLLGGRALMN), and 201 to 212 (TLWRLDLAGNNI). The stretch at 252-645 (REEKSKQFLD…IARIRDEEAQ (394 aa)) forms a coiled coil. Residue serine 661 is modified to Phosphoserine; by NEK2.

In terms of assembly, homomer. Interacts with CROCC/rootletin and CEP250. Interacts with CEP44. Interacts with CCDC102B (via N-terminus). In terms of processing, phosphorylated by NEK2 during misosis, phosphorylation reduces centrosomal localization which subsequently leads to centrosome separation.

The protein localises to the cytoplasm. Its subcellular location is the cytoskeleton. It is found in the microtubule organizing center. It localises to the centrosome. Component of the proteinaceous fiber-like linker between two centrioles, required for centrosome cohesion. The chain is Leucine-rich repeat-containing protein 45 (LRRC45) from Homo sapiens (Human).